The chain runs to 523 residues: Sorting nexin-2 (523 aa).

A disordered region spans residues 1–104; the sequence is MAAEREPPPL…EPSPAVTPVT (104 aa). Composition is skewed to low complexity over residues 27–50 and 93–104; these read LFTS…LPAE and SSEPSPAVTPVT. At serine 97 the chain carries Phosphoserine. 2 positions are modified to phosphothreonine: threonine 101 and threonine 104. Serine 117 and serine 119 each carry phosphoserine. A PX domain is found at 140-269; it reads FDIEIGVSDP…QFLESSELPR (130 aa). 4 residues coordinate a 1,2-diacyl-sn-glycero-3-phospho-(1D-myo-inositol-3-phosphate): arginine 183, serine 185, lysine 211, and arginine 235. A Phosphoserine modification is found at serine 185. The interaction with RhoG stretch occupies residues 260–523; it reads QFLESSELPR…AFLPEAKAIA (264 aa). Residue serine 277 is modified to Phosphoserine. The interval 278–295 is membrane-binding amphipathic helix; the sequence is GAGILRMVNKAADAVNKM. The BAR domain occupies 299 to 523; sequence MNESDAWFEE…AFLPEAKAIA (225 aa). Lysine 473 is modified (N6-acetyllysine).

It belongs to the sorting nexin family. As to quaternary structure, predominantly forms heterodimers with BAR domain-containing sorting nexins SNX5, SNX6 and SNX32; can self-associate to form homodimers. The heterodimers are proposed to self-assemble into helical arrays on the membrane to stabilize and expand local membrane curvature underlying endosomal tubule formation. Thought to be a component of the originally described retromer complex (also called SNX-BAR retromer) which is a pentamer containing the heterotrimeric retromer cargo-selective complex (CSC), also described as vacuolar protein sorting subcomplex (VPS), and a heterodimeric membrane-deforming subcomplex formed between SNX1 or SNX2 and SNX5 or SNX6 (also called SNX-BAR subcomplex); the respective CSC and SNX-BAR subcomplexes associate with low affinity. Interacts with SNX5, SNX6, SNX32, VPS26A, VPS29, VPS35, FNBP1, KALRN, RHOG (GDP-bound form).

The protein resides in the early endosome membrane. Its subcellular location is the cell projection. The protein localises to the lamellipodium. Functionally, involved in several stages of intracellular trafficking. Interacts with membranes containing phosphatidylinositol 3-phosphate (PtdIns(3P)) or phosphatidylinositol 3,5-bisphosphate (PtdIns(3,5)P2). Acts in part as component of the retromer membrane-deforming SNX-BAR subcomplex. The SNX-BAR retromer mediates retrograde transport of cargo proteins from endosomes to the trans-Golgi network (TGN) and is involved in endosome-to-plasma membrane transport for cargo protein recycling. The SNX-BAR subcomplex functions to deform the donor membrane into a tubular profile called endosome-to-TGN transport carrier (ETC). Can sense membrane curvature and has in vitro vesicle-to-membrane remodeling activity. Required for retrograde endosome-to-TGN transport of TGN38. Promotes KALRN- and RHOG-dependent but retromer-independent membrane remodeling such as lamellipodium formation; the function is dependent on GEF activity of KALRN. This chain is Sorting nexin-2 (SNX2), found in Macaca fascicularis (Crab-eating macaque).